The primary structure comprises 294 residues: Transmembrane protein 178B (294 aa).

The signal sequence occupies residues 1 to 23 (MAAGRLLLYTGLSLALCALGMLA). Residues asparagine 148 and asparagine 152 are each glycosylated (N-linked (GlcNAc...) asparagine). Transmembrane regions (helical) follow at residues 172–192 (AGFM…GVLG), 206–226 (LLFL…VAGI), and 252–272 (MFCA…CTLA).

This sequence belongs to the TMEM178 family.

Its subcellular location is the membrane. The sequence is that of Transmembrane protein 178B (TMEM178B) from Homo sapiens (Human).